Consider the following 788-residue polypeptide: Endonuclease MutS2 (788 aa).

Residue 332 to 339 (GPNTGGKT) coordinates ATP. The Smr domain maps to 713 to 788 (VDLRGMDAEE…GTGVTVVEIK (76 aa)).

This sequence belongs to the DNA mismatch repair MutS family. MutS2 subfamily. In terms of assembly, homodimer. Binds to stalled ribosomes, contacting rRNA.

Endonuclease that is involved in the suppression of homologous recombination and thus may have a key role in the control of bacterial genetic diversity. In terms of biological role, acts as a ribosome collision sensor, splitting the ribosome into its 2 subunits. Detects stalled/collided 70S ribosomes which it binds and splits by an ATP-hydrolysis driven conformational change. Acts upstream of the ribosome quality control system (RQC), a ribosome-associated complex that mediates the extraction of incompletely synthesized nascent chains from stalled ribosomes and their subsequent degradation. Probably generates substrates for RQC. The polypeptide is Endonuclease MutS2 (Clostridium botulinum (strain 657 / Type Ba4)).